The sequence spans 78 residues: Sec-independent protein translocase protein TatA (78 aa).

A helical transmembrane segment spans residues Met-1–Gly-21. The interval Lys-40–Val-78 is disordered. Residues Glu-46–Val-78 are compositionally biased toward basic and acidic residues.

Belongs to the TatA/E family. In terms of assembly, the Tat system comprises two distinct complexes: a TatABC complex, containing multiple copies of TatA, TatB and TatC subunits, and a separate TatA complex, containing only TatA subunits. Substrates initially bind to the TatABC complex, which probably triggers association of the separate TatA complex to form the active translocon.

The protein localises to the cell inner membrane. Its function is as follows. Part of the twin-arginine translocation (Tat) system that transports large folded proteins containing a characteristic twin-arginine motif in their signal peptide across membranes. TatA could form the protein-conducting channel of the Tat system. The sequence is that of Sec-independent protein translocase protein TatA from Shewanella sediminis (strain HAW-EB3).